We begin with the raw amino-acid sequence, 155 residues long: UPF0060 membrane protein MA_3936 (155 aa).

3 consecutive transmembrane segments (helical) span residues Leu-8–Trp-28, Ala-35–Gln-55, and Val-62–Asp-82.

It belongs to the UPF0060 family.

It localises to the cell membrane. In Methanosarcina acetivorans (strain ATCC 35395 / DSM 2834 / JCM 12185 / C2A), this protein is UPF0060 membrane protein MA_3936.